We begin with the raw amino-acid sequence, 238 residues long: Pyruvate formate-lyase-activating enzyme (238 aa).

The Radical SAM core domain maps to 15–236; that stretch reads VDGPGIRTVV…KKLEKYLKEL (222 aa). [4Fe-4S] cluster is bound by residues C29, C33, and C36. S-adenosyl-L-methionine-binding positions include 35 to 37, G78, 126 to 128, and H199; these read YCH and DIK.

It belongs to the organic radical-activating enzymes family. It depends on [4Fe-4S] cluster as a cofactor.

It is found in the cytoplasm. The enzyme catalyses glycyl-[formate C-acetyltransferase] + reduced [flavodoxin] + S-adenosyl-L-methionine = glycin-2-yl radical-[formate C-acetyltransferase] + semiquinone [flavodoxin] + 5'-deoxyadenosine + L-methionine + H(+). Functionally, activation of pyruvate formate-lyase under anaerobic conditions by generation of an organic free radical, using S-adenosylmethionine and reduced flavodoxin as cosubstrates to produce 5'-deoxy-adenosine. This chain is Pyruvate formate-lyase-activating enzyme (act), found in Clostridium pasteurianum.